The chain runs to 104 residues: Synaptic plasticity regulator PANTS (104 aa).

Residues 58–104 are disordered; that stretch reads RRSAEAQADSLPPGPEGEPRVAGAGPNAVTGILTRNQGTERPHGDTR. The span at 95-104 shows a compositional bias: basic and acidic residues; it reads GTERPHGDTR.

This sequence belongs to the UPF0545 family. In terms of assembly, interacts with RTN4 isoform A/Nogo-A; the interaction results in enhanced RTN4-mediated inhibition of AMPA receptor clustering. Also interacts with NCAM1, RANBP2 and CCT8. Post-translationally, rapidly degraded by proteolysis following neuronal stimulation, resulting in increased AMPA receptor clustering.

Its subcellular location is the synapse. It localises to the synaptic cleft. Negatively regulates long-term potentiation and modulates adult synaptic plasticity. Stabilizes the interaction of RTN4 isoform A/Nogo-A with its receptors, inhibiting clustering of postsynaptic AMPA receptors at synaptic sites. Upon neuronal stimulation, degraded at synapses, reducing RTN4 signaling and allowing AMPA receptor clustering at individual synapses. The chain is Synaptic plasticity regulator PANTS from Bos taurus (Bovine).